The primary structure comprises 139 residues: NADPH-dependent 7-cyano-7-deazaguanine reductase (139 aa).

The Thioimide intermediate role is filled by C34. D41 functions as the Proton donor in the catalytic mechanism. Residues 56 to 58 (IEL) and 75 to 76 (HE) each bind substrate.

Belongs to the GTP cyclohydrolase I family. QueF type 1 subfamily.

The protein resides in the cytoplasm. It catalyses the reaction 7-aminomethyl-7-carbaguanine + 2 NADP(+) = 7-cyano-7-deazaguanine + 2 NADPH + 3 H(+). It functions in the pathway tRNA modification; tRNA-queuosine biosynthesis. In terms of biological role, catalyzes the NADPH-dependent reduction of 7-cyano-7-deazaguanine (preQ0) to 7-aminomethyl-7-deazaguanine (preQ1). The chain is NADPH-dependent 7-cyano-7-deazaguanine reductase from Nitrosomonas europaea (strain ATCC 19718 / CIP 103999 / KCTC 2705 / NBRC 14298).